The primary structure comprises 250 residues: 5'-nucleotidase SurE (250 aa).

The a divalent metal cation site is built by aspartate 8, aspartate 9, serine 40, and asparagine 95.

It belongs to the SurE nucleotidase family. A divalent metal cation is required as a cofactor.

The protein localises to the cytoplasm. It carries out the reaction a ribonucleoside 5'-phosphate + H2O = a ribonucleoside + phosphate. Nucleotidase that shows phosphatase activity on nucleoside 5'-monophosphates. The sequence is that of 5'-nucleotidase SurE from Nitratidesulfovibrio vulgaris (strain DP4) (Desulfovibrio vulgaris).